Reading from the N-terminus, the 35-residue chain is Neurotoxin (35 aa).

3 cysteine pairs are disulfide-bonded: C7–C27, C14–C32, and C18–C34.

In terms of tissue distribution, expressed by the venom gland.

The protein localises to the secreted. Its function is as follows. Neurotoxin. Decreases the action potential of myelinated nerves in mice and frogs. The polypeptide is Neurotoxin (Buthus sp. (strain IY-2001) (Scorpion)).